Reading from the N-terminus, the 66-residue chain is MKMSALFPIFGLPLLFCNSFAAELKATGRGCGGLMDGCDGKSTFCCSGFNCSPTWKWCVYARPGRR.

Positions 1–21 (MKMSALFPIFGLPLLFCNSFA) are cleaved as a signal peptide. Residues 22-29 (AELKATGR) constitute a propeptide that is removed on maturation. 3 cysteine pairs are disulfide-bonded: cysteine 31-cysteine 46, cysteine 38-cysteine 51, and cysteine 45-cysteine 58. Proline 63 carries the proline amide modification.

Belongs to the neurotoxin 10 (Hwtx-1) family. 46 (Jztx-7/10/12) subfamily. In terms of tissue distribution, expressed by the venom gland.

It localises to the secreted. In terms of biological role, probable ion channel inhibitor. This is U1-theraphotoxin-Cg1d 2 from Chilobrachys guangxiensis (Chinese earth tiger tarantula).